The chain runs to 287 residues: ATP synthase gamma chain (287 aa).

This sequence belongs to the ATPase gamma chain family. As to quaternary structure, F-type ATPases have 2 components, CF(1) - the catalytic core - and CF(0) - the membrane proton channel. CF(1) has five subunits: alpha(3), beta(3), gamma(1), delta(1), epsilon(1). CF(0) has three main subunits: a, b and c. The F(1)F(0) complex interacts with SpoIIIJ and YqjG; YqgA is found in the same complex. Interacts with FloT.

Its subcellular location is the cell membrane. It is found in the membrane raft. Produces ATP from ADP in the presence of a proton gradient across the membrane. The gamma chain is believed to be important in regulating ATPase activity and the flow of protons through the CF(0) complex. The polypeptide is ATP synthase gamma chain (Bacillus subtilis (strain 168)).